The chain runs to 21 residues: SIKDKICKIIQAQCGKKLPFT.

The cysteines at positions 7 and 14 are disulfide-linked. At Thr21 the chain carries Threonine amide.

The protein belongs to the sylv/frat/paul family. In terms of processing, occurs in oxidized and reduced states which are thought to adopt a compact globular and linear structure, respectively.

Its function is as follows. Induces transient hyperalgesia and paw edema in mice. Probably exerts its effects via different pathways in an oxidation state-dependent way. This chain is Paulistine, found in Polybia paulista (Neotropical social wasp).